The primary structure comprises 428 residues: Dihydroorotase (428 aa).

The Zn(2+) site is built by His-59 and His-61. Substrate is bound by residues 61 to 63 (HLR) and Asn-93. Residues Asp-151, His-178, and His-231 each contribute to the Zn(2+) site. Residue Asn-277 coordinates substrate. Asp-304 provides a ligand contact to Zn(2+). Residue Asp-304 is part of the active site. Substrate-binding positions include His-308 and 322 to 323 (FG).

The protein belongs to the metallo-dependent hydrolases superfamily. DHOase family. Class I DHOase subfamily. It depends on Zn(2+) as a cofactor.

It catalyses the reaction (S)-dihydroorotate + H2O = N-carbamoyl-L-aspartate + H(+). It functions in the pathway pyrimidine metabolism; UMP biosynthesis via de novo pathway; (S)-dihydroorotate from bicarbonate: step 3/3. Its function is as follows. Catalyzes the reversible cyclization of carbamoyl aspartate to dihydroorotate. The protein is Dihydroorotase of Bacillus cereus (strain ZK / E33L).